A 232-amino-acid polypeptide reads, in one-letter code: Ribonuclease 3 (232 aa).

Positions 5-134 (QTVLKNHFEI…FLGALLLDKD (130 aa)) constitute an RNase III domain. Mg(2+) is bound at residue glutamate 47. Residue aspartate 51 is part of the active site. Mg(2+) is bound by residues aspartate 120 and glutamate 123. Residue glutamate 123 is part of the active site. One can recognise a DRBM domain in the interval 160–229 (DYKTHLQELL…AKNAVEKGLD (70 aa)).

It belongs to the ribonuclease III family. In terms of assembly, homodimer. The cofactor is Mg(2+).

Its subcellular location is the cytoplasm. It catalyses the reaction Endonucleolytic cleavage to 5'-phosphomonoester.. Its function is as follows. Digests double-stranded RNA. Involved in the processing of primary rRNA transcript to yield the immediate precursors to the large and small rRNAs (23S and 16S). Processes some mRNAs, and tRNAs when they are encoded in the rRNA operon. Processes pre-crRNA and tracrRNA of type II CRISPR loci if present in the organism. The chain is Ribonuclease 3 from Streptococcus pneumoniae (strain ATCC BAA-255 / R6).